The sequence spans 103 residues: Large ribosomal subunit protein bL21 (103 aa).

Belongs to the bacterial ribosomal protein bL21 family. As to quaternary structure, part of the 50S ribosomal subunit. Contacts protein L20.

Its function is as follows. This protein binds to 23S rRNA in the presence of protein L20. The chain is Large ribosomal subunit protein bL21 from Mycobacteroides abscessus (strain ATCC 19977 / DSM 44196 / CCUG 20993 / CIP 104536 / JCM 13569 / NCTC 13031 / TMC 1543 / L948) (Mycobacterium abscessus).